A 791-amino-acid polypeptide reads, in one-letter code: IQ motif and ubiquitin-like domain-containing protein (791 aa).

Residues 1-73 (MSNQQEKYEA…SDQSFSSLEP (73 aa)) are disordered. Residues 131-207 (ATVKVVLIPV…VQVEIFSTNP (77 aa)) form the Ubiquitin-like domain. The 30-residue stretch at 338 to 367 (RLKAVIVIQTYYRQWHAKIFVENLRRQKSL) folds into the IQ domain.

Component of the axonemal radial spoke 1 (RS1) complex, at least composed of spoke head proteins RSPH1, RSPH3, RSPH9 and the cilia-specific component RSPH4A or sperm-specific component RSPH6A, spoke stalk proteins RSPH14, DNAJB13, DYDC1, ROPN1L and NME5, and the anchor protein IQUB. Does not appear to be part of radial spoke complexes 2 or 3 (RS2 or RS3). Interacts with CALM1. Interacts with DNAJB13. Interacts with DYNLL2. Interacts with NME5. Interacts with RSPH3. Interacts with RSPH9. Interacts with ZMYND10. Interacts with calmodulin; the interaction occurs in conditions of low but not high calcium.

It is found in the cytoplasm. It localises to the cytoskeleton. Its subcellular location is the flagellum axoneme. The protein localises to the cell projection. The protein resides in the cilium. Its function is as follows. Adapter protein that anchors the radial spoke 1 (RS1) complex to the A microtubule of outer doublet microtubules in axonemes. The triple radial spokes (RS1, RS2 and RS3) are required to modulate beating of the sperm flagellum. May play a role in inhibiting signaling via MAPK1/ERK2 and MAPK3/ERK1. Additionally, may play a role in the functioning of cilia. Not required for the functioning of tracheal or ependymal cilia. The polypeptide is IQ motif and ubiquitin-like domain-containing protein (IQUB) (Homo sapiens (Human)).